Here is a 309-residue protein sequence, read N- to C-terminus: Oxygen-dependent coproporphyrinogen-III oxidase (309 aa).

S100 contacts substrate. H104 and H114 together coordinate a divalent metal cation. H114 (proton donor) is an active-site residue. Residue 116 to 118 coordinates substrate; that stretch reads NVR. 2 residues coordinate a divalent metal cation: H153 and H183. The important for dimerization stretch occupies residues 248-283; it reads YAEFNLVYDRGTLFGLQSGGRTESILMSLPPIVHWE. Residue 266–268 coordinates substrate; it reads GGR.

It belongs to the aerobic coproporphyrinogen-III oxidase family. As to quaternary structure, homodimer. Requires a divalent metal cation as cofactor.

The protein localises to the cytoplasm. The enzyme catalyses coproporphyrinogen III + O2 + 2 H(+) = protoporphyrinogen IX + 2 CO2 + 2 H2O. The protein operates within porphyrin-containing compound metabolism; protoporphyrin-IX biosynthesis; protoporphyrinogen-IX from coproporphyrinogen-III (O2 route): step 1/1. In terms of biological role, involved in the heme biosynthesis. Catalyzes the aerobic oxidative decarboxylation of propionate groups of rings A and B of coproporphyrinogen-III to yield the vinyl groups in protoporphyrinogen-IX. This chain is Oxygen-dependent coproporphyrinogen-III oxidase, found in Legionella pneumophila (strain Lens).